The chain runs to 145 residues: Putative antiporter subunit mnhG2 (145 aa).

Transmembrane regions (helical) follow at residues 11–31 (IAAV…IGIV), 51–71 (VLLT…FFSV), and 72–92 (RLLL…HLVA).

This sequence belongs to the CPA3 antiporters (TC 2.A.63) subunit G family. As to quaternary structure, may form a heterooligomeric complex that consists of seven subunits: mnhA2, mnhB2, mnhC2, mnhD2, mnhE2, mnhF2 and mnhG2.

It localises to the cell membrane. This chain is Putative antiporter subunit mnhG2 (mnhG2), found in Staphylococcus aureus (strain MRSA252).